Here is a 232-residue protein sequence, read N- to C-terminus: 5'-methylthioadenosine/S-adenosylhomocysteine nucleosidase (232 aa).

Glutamate 12 functions as the Proton acceptor in the catalytic mechanism. Residues glycine 78, methionine 153, and 174-175 (ME) each bind substrate. Residue aspartate 198 is the Proton donor of the active site.

It belongs to the PNP/UDP phosphorylase family. MtnN subfamily.

It catalyses the reaction S-adenosyl-L-homocysteine + H2O = S-(5-deoxy-D-ribos-5-yl)-L-homocysteine + adenine. It carries out the reaction S-methyl-5'-thioadenosine + H2O = 5-(methylsulfanyl)-D-ribose + adenine. The enzyme catalyses 5'-deoxyadenosine + H2O = 5-deoxy-D-ribose + adenine. The protein operates within amino-acid biosynthesis; L-methionine biosynthesis via salvage pathway; S-methyl-5-thio-alpha-D-ribose 1-phosphate from S-methyl-5'-thioadenosine (hydrolase route): step 1/2. Catalyzes the irreversible cleavage of the glycosidic bond in both 5'-methylthioadenosine (MTA) and S-adenosylhomocysteine (SAH/AdoHcy) to adenine and the corresponding thioribose, 5'-methylthioribose and S-ribosylhomocysteine, respectively. Also cleaves 5'-deoxyadenosine, a toxic by-product of radical S-adenosylmethionine (SAM) enzymes, into 5-deoxyribose and adenine. The protein is 5'-methylthioadenosine/S-adenosylhomocysteine nucleosidase of Geobacillus sp. (strain WCH70).